The following is a 243-amino-acid chain: tRNA (guanine-N(7)-)-methyltransferase (243 aa).

S-adenosyl-L-methionine contacts are provided by E74, E99, D126, and D149. D149 is an active-site residue. Substrate is bound by residues K153, D185, and 221–224; that span reads TKFE.

Belongs to the class I-like SAM-binding methyltransferase superfamily. TrmB family.

It carries out the reaction guanosine(46) in tRNA + S-adenosyl-L-methionine = N(7)-methylguanosine(46) in tRNA + S-adenosyl-L-homocysteine. It participates in tRNA modification; N(7)-methylguanine-tRNA biosynthesis. Its function is as follows. Catalyzes the formation of N(7)-methylguanine at position 46 (m7G46) in tRNA. The chain is tRNA (guanine-N(7)-)-methyltransferase from Psychromonas ingrahamii (strain DSM 17664 / CCUG 51855 / 37).